We begin with the raw amino-acid sequence, 288 residues long: Protein sprouty homolog 3 (288 aa).

In terms of domain architecture, SPR spans Lys-154–Cys-260.

Belongs to the sprouty family. In terms of assembly, interacts with TESK1. Interacts with USP11. Interacts with CAV1 (via C-terminus). In terms of tissue distribution, widely expressed; particularly in the fetal tissues. Expressed in the brain with expression the highest in Purkinje cells in the cerebellum (at protein level). Expressed in the myocardium of the heart.

Its subcellular location is the cytoplasm. In terms of biological role, inhibits neurite branching, arbor length and neurite complexity. Inhibits EGF-mediated p42/44 ERK signaling. Negatively regulates the MAPK cascade, resulting in a reduction of extracellular matrix protein accumulation. May function as an antagonist of fibroblast growth factor (FGF) pathways and may negatively modulate respiratory organogenesis. The polypeptide is Protein sprouty homolog 3 (Homo sapiens (Human)).